The following is a 386-amino-acid chain: ATP phosphoribosyltransferase regulatory subunit (386 aa).

This sequence belongs to the class-II aminoacyl-tRNA synthetase family. HisZ subfamily. As to quaternary structure, heteromultimer composed of HisG and HisZ subunits.

It localises to the cytoplasm. It functions in the pathway amino-acid biosynthesis; L-histidine biosynthesis; L-histidine from 5-phospho-alpha-D-ribose 1-diphosphate: step 1/9. Functionally, required for the first step of histidine biosynthesis. May allow the feedback regulation of ATP phosphoribosyltransferase activity by histidine. This Variovorax paradoxus (strain S110) protein is ATP phosphoribosyltransferase regulatory subunit.